A 377-amino-acid chain; its full sequence is Nitric oxide reductase FlRd-NAD(+) reductase (377 aa).

This sequence belongs to the FAD-dependent oxidoreductase family. FAD is required as a cofactor.

The protein localises to the cytoplasm. The enzyme catalyses 2 reduced [nitric oxide reductase rubredoxin domain] + NAD(+) + H(+) = 2 oxidized [nitric oxide reductase rubredoxin domain] + NADH. It functions in the pathway nitrogen metabolism; nitric oxide reduction. Functionally, one of at least two accessory proteins for anaerobic nitric oxide (NO) reductase. Reduces the rubredoxin moiety of NO reductase. The polypeptide is Nitric oxide reductase FlRd-NAD(+) reductase (Escherichia coli O157:H7).